A 708-amino-acid polypeptide reads, in one-letter code: Elongation factor G (708 aa).

The 283-residue stretch at 8-290 (KRYRNIGISA…AVIQYLPAPM (283 aa)) folds into the tr-type G domain. Residues 17-24 (AHIDAGKT), 88-92 (DTPGH), and 142-145 (NKMD) contribute to the GTP site.

The protein belongs to the TRAFAC class translation factor GTPase superfamily. Classic translation factor GTPase family. EF-G/EF-2 subfamily.

Its subcellular location is the cytoplasm. Functionally, catalyzes the GTP-dependent ribosomal translocation step during translation elongation. During this step, the ribosome changes from the pre-translocational (PRE) to the post-translocational (POST) state as the newly formed A-site-bound peptidyl-tRNA and P-site-bound deacylated tRNA move to the P and E sites, respectively. Catalyzes the coordinated movement of the two tRNA molecules, the mRNA and conformational changes in the ribosome. The chain is Elongation factor G from Psychrobacter cryohalolentis (strain ATCC BAA-1226 / DSM 17306 / VKM B-2378 / K5).